The primary structure comprises 775 residues: K(+)-insensitive pyrophosphate-energized proton pump (775 aa).

The next 5 helical transmembrane spans lie at 9-29 (SLAV…AFFI), 65-85 (ISIL…IIPP), 108-128 (AVAF…GMNV), 160-180 (MLTV…FGIA), and 185-205 (LLGF…GGGI). A substrate-binding site is contributed by Lys208. Residues Asp211, Asp215, and Asp241 each contribute to the Mg(2+) site. 6 helical membrane passes run 259–279 (VTLV…VGTI), 288–308 (FIIF…IGNL), 327–347 (FYIA…VFMV), 359–379 (FFAT…TEYF), 413–433 (SVWA…IYAG), and 442–462 (AILY…GNTI). Position 472 (Asp472) interacts with Mg(2+). The next 4 membrane-spanning stretches (helical) occupy residues 508 to 528 (IAIG…FTDV), 555 to 575 (PVFI…ALTI), 622 to 642 (LISL…TLGV), and 644 to 664 (ALGG…VFQA). Asp671, Asp697, and Asp701 together coordinate Ca(2+). Lys704 contacts substrate. Transmembrane regions (helical) follow at residues 710 to 730 (ALNP…PIVV) and 735 to 755 (GSPG…WAIW).

It belongs to the H(+)-translocating pyrophosphatase (TC 3.A.10) family. K(+)-insensitive subfamily. As to quaternary structure, homodimer. Mg(2+) serves as cofactor.

It is found in the cell membrane. It carries out the reaction diphosphate + H2O + H(+)(in) = 2 phosphate + 2 H(+)(out). Its function is as follows. Proton pump that utilizes the energy of pyrophosphate hydrolysis as the driving force for proton movement across the membrane. Generates a proton motive force. This chain is K(+)-insensitive pyrophosphate-energized proton pump, found in Chloroflexus aurantiacus (strain ATCC 29366 / DSM 635 / J-10-fl).